The sequence spans 533 residues: Glucose-6-phosphate isomerase (533 aa).

Catalysis depends on Glu330, which acts as the Proton donor. Catalysis depends on residues His359 and Lys461.

It belongs to the GPI family.

The protein resides in the cytoplasm. The enzyme catalyses alpha-D-glucose 6-phosphate = beta-D-fructose 6-phosphate. The protein operates within carbohydrate biosynthesis; gluconeogenesis. Its pathway is carbohydrate degradation; glycolysis; D-glyceraldehyde 3-phosphate and glycerone phosphate from D-glucose: step 2/4. Its function is as follows. Catalyzes the reversible isomerization of glucose-6-phosphate to fructose-6-phosphate. This chain is Glucose-6-phosphate isomerase, found in Prochlorococcus marinus (strain SARG / CCMP1375 / SS120).